Consider the following 442-residue polypeptide: Decapping and exoribonuclease protein 1 (442 aa).

Basic and acidic residues predominate over residues 31–40 (QSKLCKEKTT). The tract at residues 31–56 (QSKLCKEKTTSDSSSSRKPSQQRDNY) is disordered. Positions 41-53 (SDSSSSRKPSQQR) are enriched in low complexity. Arg-101 is a substrate binding site. Glu-255 serves as a coordination point for a divalent metal cation. Glu-293 contacts substrate. Positions 295, 306, and 307 each coordinate a divalent metal cation. Substrate-binding residues include Lys-308 and Gln-330.

The protein belongs to the DXO/Dom3Z family. A divalent metal cation is required as a cofactor.

The protein localises to the cytoplasm. The catalysed reaction is a 5'-end NAD(+)-phospho-ribonucleoside in mRNA + H2O = a 5'-end phospho-ribonucleoside in mRNA + NAD(+) + H(+). It carries out the reaction a 5'-end (N(7)-methyl 5'-triphosphoguanosine)-ribonucleoside-ribonucleotide in mRNA + H2O = a (N(7)-methyl 5'-triphosphoguanosine)-nucleoside + a 5'-end phospho-ribonucleoside in mRNA + H(+). Its function is as follows. Decapping enzyme for NAD-capped RNAs: specifically hydrolyzes the nicotinamide adenine dinucleotide (NAD) cap from a subset of RNAs by removing the entire NAD moiety from the 5'-end of an NAD-capped RNA. The NAD-cap is present at the 5'-end of some RNAs and snoRNAs. In contrast to the canonical 5'-end N7 methylguanosine (m7G) cap, the NAD cap promotes mRNA decay. Also acts as a non-canonical decapping enzyme that removes the entire cap structure of m7G capped or incompletely capped RNAs. Has decapping activity toward incomplete 5'-end m7G cap mRNAs such as unmethylated 5'-end-capped RNA (cap0), while it has no activity toward 2'-O-ribose methylated m7G cap (cap1). Also has 5'-3' exonuclease activity. This Saccharomyces cerevisiae (strain ATCC 204508 / S288c) (Baker's yeast) protein is Decapping and exoribonuclease protein 1 (DXO1).